We begin with the raw amino-acid sequence, 311 residues long: p-hydroxybenzoic acid efflux pump subunit AaeA (311 aa).

A helical membrane pass occupies residues 11–31; that stretch reads IGITLLVVLLAVIAIFKVWAF.

It belongs to the membrane fusion protein (MFP) (TC 8.A.1) family.

The protein localises to the cell inner membrane. In terms of biological role, forms an efflux pump with AaeB. The polypeptide is p-hydroxybenzoic acid efflux pump subunit AaeA (Yersinia enterocolitica serotype O:8 / biotype 1B (strain NCTC 13174 / 8081)).